The primary structure comprises 140 residues: Transmembrane protein 107 (140 aa).

Helical transmembrane passes span 7 to 27 (LVPS…TLFW) and 53 to 73 (LVAA…GFLS). The N-linked (GlcNAc...) asparagine glycan is linked to Asn-79. The next 2 helical transmembrane spans lie at 83–103 (SLLS…FVFE) and 113–133 (IFTF…IAVF).

Part of the tectonic-like complex (also named B9 complex). Interacts with TMEM237, TMEM231, MKS1 and TMEM216.

The protein resides in the membrane. Its subcellular location is the cell projection. It localises to the cilium. In terms of biological role, plays a role in cilia formation and embryonic patterning. Requires for normal Sonic hedgehog (Shh) signaling in the neural tube and acts in combination with GLI2 and GLI3 to pattern ventral and intermediate neuronal cell types. During ciliogenesis regulates the ciliary transition zone localization of some MKS complex proteins. The sequence is that of Transmembrane protein 107 from Mus musculus (Mouse).